The sequence spans 448 residues: B box and SPRY domain-containing protein (448 aa).

Positions 1–18 (MSSDVSGTESGSESGPES) are enriched in low complexity. A disordered region spans residues 1–58 (MSSDVSGTESGSESGPESVPEPVPEPGPEPESEPGPGPAPGPGPGPAPGPGPGLGREP). Positions 19 to 51 (VPEPVPEPGPEPESEPGPGPAPGPGPGPAPGPG) are enriched in pro residues. The B box-type zinc finger occupies 63–111 (QPCQLCPEHGKPLSWFCLSERRPVCATCAGFGGRCHRHRIRRAEEHAEE). One can recognise a B30.2/SPRY domain in the interval 257-448 (SPLLTQLWAT…VADQVISIVC (192 aa)).

In terms of assembly, interacts with TRPV5 and TRPV6. Interacts with YWHAZ/14-3-3 protein zeta. In terms of tissue distribution, predominantly expressed in testis. Expressed in brain at low levels.

The protein resides in the cytoplasm. Its subcellular location is the membrane. Its function is as follows. May regulate epithelial calcium transport by inhibiting TRPV5 activity. The chain is B box and SPRY domain-containing protein (Bspry) from Rattus norvegicus (Rat).